The sequence spans 1703 residues: Pecanex-like protein 1 (1703 aa).

Helical transmembrane passes span 31–53 (VNALHLYIWLFLLCFPFTLYMAL) and 57–74 (MVIVGIYCGVIAAMFLLL). A compositionally biased stretch (basic and acidic residues) spans 91–100 (VEHQTRESKG). The interval 91-126 (VEHQTRESKGSRGGTGGANDPVTRREDSNGLGDPGG) is disordered. Asn256 is a glycosylation site (N-linked (GlcNAc...) asparagine). The next 3 membrane-spanning stretches (helical) occupy residues 416–438 (VLAVVLAVLVAFLGSVLLIHGFF), 477–499 (AYSRPVYFCLCCGLIWLLHYGSL), and 525–547 (LVIVFTLCFPIIFFVGLLPQVNT). Asn564 carries an N-linked (GlcNAc...) asparagine glycan. Helical transmembrane passes span 569 to 591 (LLSALYSILRSIVTVALLYCFCY), 603 to 622 (IPVLFSVFCGLLVAVSYHLS), 675 to 697 (LIVCVVIAVLYFAIHVSTVFIAL), and 704 to 721 (VLYGLLGAVGLLTHYLLP). N-linked (GlcNAc...) asparagine glycans are attached at residues Asn988, Asn1129, and Asn1391. Disordered regions lie at residues 1475–1556 (VQSG…HSIP) and 1577–1598 (TDPLSQHHHPHHHPQQHNPTHA). Low complexity-rich tracts occupy residues 1485-1510 (ARASVVSQSSSYRYSSSRHSSLRTST) and 1518-1556 (RSSTSQLSLRTLPTSLQLRLGSTSDPAGPSSSLSSHSIP). Positions 1582 to 1591 (QHHHPHHHPQ) are enriched in basic residues. N-linked (GlcNAc...) asparagine glycosylation is present at Asn1622.

It belongs to the pecanex family.

Its subcellular location is the membrane. This is Pecanex-like protein 1 from Takifugu rubripes (Japanese pufferfish).